Consider the following 167-residue polypeptide: Lipoprotein signal peptidase (167 aa).

The next 2 helical transmembrane spans lie at 56–76 (FAPP…VLVF) and 84–104 (TPIF…NMID). Catalysis depends on residues Asp113 and Asp139. A helical membrane pass occupies residues 132-152 (WPIFNVADSAITIGACMLVLF).

It belongs to the peptidase A8 family.

It is found in the cell inner membrane. It catalyses the reaction Release of signal peptides from bacterial membrane prolipoproteins. Hydrolyzes -Xaa-Yaa-Zaa-|-(S,diacylglyceryl)Cys-, in which Xaa is hydrophobic (preferably Leu), and Yaa (Ala or Ser) and Zaa (Gly or Ala) have small, neutral side chains.. The protein operates within protein modification; lipoprotein biosynthesis (signal peptide cleavage). Its function is as follows. This protein specifically catalyzes the removal of signal peptides from prolipoproteins. This Chlorobium luteolum (strain DSM 273 / BCRC 81028 / 2530) (Pelodictyon luteolum) protein is Lipoprotein signal peptidase.